The sequence spans 104 residues: MKIRKGDTVLVISGPDKGAKGKVIEAYPQRDKVLVEGVNRIKKHVANSAPERGAESGGIVTQEAPIHVSNVMVVDSDGNPTRIGYRFDEDGKKIRVSKRNGKDI.

The protein belongs to the universal ribosomal protein uL24 family. Part of the 50S ribosomal subunit.

One of two assembly initiator proteins, it binds directly to the 5'-end of the 23S rRNA, where it nucleates assembly of the 50S subunit. In terms of biological role, one of the proteins that surrounds the polypeptide exit tunnel on the outside of the subunit. The sequence is that of Large ribosomal subunit protein uL24 from Corynebacterium jeikeium (strain K411).